An 87-amino-acid chain; its full sequence is uncharacterized protein (87 aa).

A helical transmembrane segment spans residues 63–83; that stretch reads IVLALVLGVFSLVGLIFIIYF.

The protein resides in the membrane. This is an uncharacterized protein from Dictyostelium discoideum (Social amoeba).